Reading from the N-terminus, the 295-residue chain is Ribosomal protein L11 methyltransferase (295 aa).

4 residues coordinate S-adenosyl-L-methionine: Thr-145, Gly-166, Asp-188, and Asn-230.

The protein belongs to the methyltransferase superfamily. PrmA family.

The protein localises to the cytoplasm. The enzyme catalyses L-lysyl-[protein] + 3 S-adenosyl-L-methionine = N(6),N(6),N(6)-trimethyl-L-lysyl-[protein] + 3 S-adenosyl-L-homocysteine + 3 H(+). In terms of biological role, methylates ribosomal protein L11. The polypeptide is Ribosomal protein L11 methyltransferase (Pectobacterium carotovorum subsp. carotovorum (strain PC1)).